We begin with the raw amino-acid sequence, 1400 residues long: DNA-directed RNA polymerase subunit beta' (1400 aa).

Residues cysteine 71, cysteine 73, cysteine 86, and cysteine 89 each contribute to the Zn(2+) site. Positions 462, 464, and 466 each coordinate Mg(2+). The Zn(2+) site is built by cysteine 811, cysteine 885, cysteine 892, and cysteine 895.

Belongs to the RNA polymerase beta' chain family. In terms of assembly, the RNAP catalytic core consists of 2 alpha, 1 beta, 1 beta' and 1 omega subunit. When a sigma factor is associated with the core the holoenzyme is formed, which can initiate transcription. The cofactor is Mg(2+). It depends on Zn(2+) as a cofactor.

It carries out the reaction RNA(n) + a ribonucleoside 5'-triphosphate = RNA(n+1) + diphosphate. Its function is as follows. DNA-dependent RNA polymerase catalyzes the transcription of DNA into RNA using the four ribonucleoside triphosphates as substrates. This Brucella abortus (strain S19) protein is DNA-directed RNA polymerase subunit beta'.